Consider the following 121-residue polypeptide: Basic phospholipase A2 homolog (121 aa).

Cystine bridges form between cysteine 26-cysteine 115, cysteine 28-cysteine 44, cysteine 43-cysteine 95, cysteine 49-cysteine 121, cysteine 50-cysteine 88, cysteine 57-cysteine 81, and cysteine 75-cysteine 86.

It belongs to the phospholipase A2 family. Group II subfamily. K49 sub-subfamily. Homodimer. Expressed by the venom gland.

The protein resides in the secreted. Snake venom phospholipase A2 homolog that lacks enzymatic activity, but has myotoxic and cytolytic activities. In Metlapilcoatlus nummifer (Mexican jumping pitviper), this protein is Basic phospholipase A2 homolog.